Here is a 624-residue protein sequence, read N- to C-terminus: Phosphomethylpyrimidine synthase (624 aa).

Positions 48 to 70 (SDTHTSQGREKNPPLTVYDTSGP) are disordered. Substrate-binding positions include N229, M258, Y287, H323, 343–345 (SRG), 384–387 (DGLR), and E423. H427 is a Zn(2+) binding site. Y450 serves as a coordination point for substrate. H491 lines the Zn(2+) pocket. Positions 571, 574, and 579 each coordinate [4Fe-4S] cluster.

This sequence belongs to the ThiC family. In terms of assembly, homodimer. Requires [4Fe-4S] cluster as cofactor.

The catalysed reaction is 5-amino-1-(5-phospho-beta-D-ribosyl)imidazole + S-adenosyl-L-methionine = 4-amino-2-methyl-5-(phosphooxymethyl)pyrimidine + CO + 5'-deoxyadenosine + formate + L-methionine + 3 H(+). It participates in cofactor biosynthesis; thiamine diphosphate biosynthesis. Functionally, catalyzes the synthesis of the hydroxymethylpyrimidine phosphate (HMP-P) moiety of thiamine from aminoimidazole ribotide (AIR) in a radical S-adenosyl-L-methionine (SAM)-dependent reaction. The chain is Phosphomethylpyrimidine synthase from Nitrosococcus oceani (strain ATCC 19707 / BCRC 17464 / JCM 30415 / NCIMB 11848 / C-107).